The primary structure comprises 180 residues: Probable chorismate pyruvate-lyase (180 aa).

Substrate is bound by residues Arg76, Leu113, and Glu171.

Belongs to the UbiC family.

Its subcellular location is the cytoplasm. The catalysed reaction is chorismate = 4-hydroxybenzoate + pyruvate. It participates in cofactor biosynthesis; ubiquinone biosynthesis. Functionally, removes the pyruvyl group from chorismate, with concomitant aromatization of the ring, to provide 4-hydroxybenzoate (4HB) for the ubiquinone pathway. The sequence is that of Probable chorismate pyruvate-lyase from Pseudoalteromonas translucida (strain TAC 125).